Consider the following 158-residue polypeptide: NAD(P)H-quinone oxidoreductase subunit J, chloroplastic (158 aa).

It belongs to the complex I 30 kDa subunit family. In terms of assembly, NDH is composed of at least 16 different subunits, 5 of which are encoded in the nucleus.

The protein resides in the plastid. Its subcellular location is the chloroplast thylakoid membrane. It catalyses the reaction a plastoquinone + NADH + (n+1) H(+)(in) = a plastoquinol + NAD(+) + n H(+)(out). The enzyme catalyses a plastoquinone + NADPH + (n+1) H(+)(in) = a plastoquinol + NADP(+) + n H(+)(out). Functionally, NDH shuttles electrons from NAD(P)H:plastoquinone, via FMN and iron-sulfur (Fe-S) centers, to quinones in the photosynthetic chain and possibly in a chloroplast respiratory chain. The immediate electron acceptor for the enzyme in this species is believed to be plastoquinone. Couples the redox reaction to proton translocation, and thus conserves the redox energy in a proton gradient. In Solanum tuberosum (Potato), this protein is NAD(P)H-quinone oxidoreductase subunit J, chloroplastic.